Consider the following 557-residue polypeptide: Potassium-transporting ATPase potassium-binding subunit (557 aa).

12 helical membrane-spanning segments follow: residues Gly5–Ser25, Leu63–Gly83, Gly132–Ile152, Leu170–Ile190, Phe253–Val273, Leu283–Val303, Val329–Ala349, Ala356–Val376, Gly379–Gly399, Leu416–Met436, Leu484–Ala504, and Leu526–Ala546.

Belongs to the KdpA family. The system is composed of three essential subunits: KdpA, KdpB and KdpC.

Its subcellular location is the cell inner membrane. In terms of biological role, part of the high-affinity ATP-driven potassium transport (or Kdp) system, which catalyzes the hydrolysis of ATP coupled with the electrogenic transport of potassium into the cytoplasm. This subunit binds the periplasmic potassium ions and delivers the ions to the membrane domain of KdpB through an intramembrane tunnel. The polypeptide is Potassium-transporting ATPase potassium-binding subunit (Escherichia coli O127:H6 (strain E2348/69 / EPEC)).